Reading from the N-terminus, the 432-residue chain is UPF0761 membrane protein Cag_0935 (432 aa).

The next 6 helical transmembrane spans lie at 52–72, 108–128, 148–168, 190–210, 220–240, and 254–274; these read LLSI…FEVF, NIPL…LSTV, FTLY…SLAA, LLAL…YMLV, AFAG…WFLF, and ALSV…VVLV.

Belongs to the UPF0761 family.

It is found in the cell inner membrane. This is UPF0761 membrane protein Cag_0935 from Chlorobium chlorochromatii (strain CaD3).